The sequence spans 351 residues: N-acetyl-gamma-glutamyl-phosphate reductase (351 aa).

Cys-154 is a catalytic residue.

It belongs to the NAGSA dehydrogenase family. Type 1 subfamily.

It is found in the cytoplasm. It catalyses the reaction N-acetyl-L-glutamate 5-semialdehyde + phosphate + NADP(+) = N-acetyl-L-glutamyl 5-phosphate + NADPH + H(+). The protein operates within amino-acid biosynthesis; L-arginine biosynthesis; N(2)-acetyl-L-ornithine from L-glutamate: step 3/4. Catalyzes the NADPH-dependent reduction of N-acetyl-5-glutamyl phosphate to yield N-acetyl-L-glutamate 5-semialdehyde. This is N-acetyl-gamma-glutamyl-phosphate reductase from Prochlorococcus marinus (strain MIT 9312).